A 206-amino-acid polypeptide reads, in one-letter code: Putative type I restriction enzyme MpnIIP endonuclease subunit C-terminal part (206 aa).

In terms of biological role, the C-terminal section of a putative type I restriction enzyme that if reconstituted might recognize 5'-GAN(7)TAY-3' and cleave a random distance away. Subunit R is required for both nuclease and ATPase activities, but not for modification. The sequence is that of Putative type I restriction enzyme MpnIIP endonuclease subunit C-terminal part from Mycoplasma pneumoniae (strain ATCC 29342 / M129 / Subtype 1) (Mycoplasmoides pneumoniae).